The primary structure comprises 250 residues: MSGHSKWATTKHKKAVIDARRGKSFAKLIKNIEVAARTGGGDPTGNPTLYDAIQKAKKTSVPNDNIERARKRGAGEEAGGADWQTIMYEGYGPNGVAVLIECLTDNRNRAAGEVRTAMTRNGGNLADPGSVSYLFARKGVVTLEKNGQSEDDVLMAVLDAGAEEVTDLGETFEIVSEPQDLVAVRSALQEAGIDYDSAEADFRASVEVPLDVDGARKIFKLVDALEDSDDVQNVYTNIDLSDEVLAALED.

It belongs to the TACO1 family.

The protein localises to the cytoplasm. In Rhodococcus erythropolis (strain PR4 / NBRC 100887), this protein is Probable transcriptional regulatory protein RER_29220.